A 155-amino-acid chain; its full sequence is Xanthine-guanine phosphoribosyltransferase (155 aa).

5-phospho-alpha-D-ribose 1-diphosphate is bound by residues 37–38 (RG) and 91–99 (DDLVDTGNT). D92 lines the Mg(2+) pocket. Residues D95 and I138 each coordinate guanine. 2 residues coordinate xanthine: D95 and I138. Residues 95-99 (DTGNT) and 137-138 (WI) contribute to the GMP site.

The protein belongs to the purine/pyrimidine phosphoribosyltransferase family. XGPT subfamily. As to quaternary structure, homotetramer. Mg(2+) serves as cofactor.

Its subcellular location is the cell inner membrane. The enzyme catalyses GMP + diphosphate = guanine + 5-phospho-alpha-D-ribose 1-diphosphate. The catalysed reaction is XMP + diphosphate = xanthine + 5-phospho-alpha-D-ribose 1-diphosphate. It catalyses the reaction IMP + diphosphate = hypoxanthine + 5-phospho-alpha-D-ribose 1-diphosphate. Its pathway is purine metabolism; GMP biosynthesis via salvage pathway; GMP from guanine: step 1/1. It functions in the pathway purine metabolism; XMP biosynthesis via salvage pathway; XMP from xanthine: step 1/1. In terms of biological role, acts on guanine, xanthine and to a lesser extent hypoxanthine. Its function is as follows. Purine salvage pathway enzyme that catalyzes the transfer of the ribosyl-5-phosphate group from 5-phospho-alpha-D-ribose 1-diphosphate (PRPP) to the N9 position of the 6-oxopurines guanine and xanthine to form the corresponding ribonucleotides GMP (guanosine 5'-monophosphate) and XMP (xanthosine 5'-monophosphate), with the release of PPi. To a lesser extent, also acts on hypoxanthine. This is Xanthine-guanine phosphoribosyltransferase from Haemophilus influenzae (strain ATCC 51907 / DSM 11121 / KW20 / Rd).